The following is a 281-amino-acid chain: L-cysteine S-thiosulfotransferase subunit SoxA (281 aa).

A signal peptide spans 1 to 25 (MTKHGFLLATLVLAGATLPIGPVTA). C99 and C130 are joined by a disulfide. One can recognise a Cytochrome c domain in the interval 175 to 281 (AAYEQGKRFY…LELNGPGARK (107 aa)). Heme-binding residues include C195 and H199. Substrate is bound at residue R238. C242 is a heme binding site. Residue C242 is the Cysteine persulfide intermediate of the active site.

This sequence belongs to the SoxA family. Heterodimer of SoxA and SoxX. Heme serves as cofactor. Post-translationally, cysteine persulfide at Cys-242.

It is found in the periplasm. The enzyme catalyses L-cysteinyl-[SoxY protein] + thiosulfate + 2 Fe(III)-[cytochrome c] = S-sulfosulfanyl-L-cysteinyl-[SoxY protein] + 2 Fe(II)-[cytochrome c] + 2 H(+). It catalyses the reaction S-sulfanyl-L-cysteinyl-[SoxY protein] + thiosulfate + 2 Fe(III)-[cytochrome c] = S-(2-sulfodisulfanyl)-L-cysteinyl-[SoxY protein] + 2 Fe(II)-[cytochrome c] + 2 H(+). Functionally, C-type monoheme cytochrome, which is part of the SoxAX cytochrome complex involved in sulfur oxidation. The SoxAX complex catalyzes the formation of a heterodisulfide bond between the conserved cysteine residue on a sulfur carrier SoxYZ complex subunit SoxY and thiosulfate or other inorganic sulfur substrates. This leads to the intermediary formation of conspicuous sulfur globules inside of the cells. The polypeptide is L-cysteine S-thiosulfotransferase subunit SoxA (Allochromatium vinosum (Chromatium vinosum)).